A 139-amino-acid polypeptide reads, in one-letter code: Large ribosomal subunit protein uL16 (139 aa).

The protein belongs to the universal ribosomal protein uL16 family. As to quaternary structure, part of the 50S ribosomal subunit.

Functionally, binds 23S rRNA and is also seen to make contacts with the A and possibly P site tRNAs. This Treponema denticola (strain ATCC 35405 / DSM 14222 / CIP 103919 / JCM 8153 / KCTC 15104) protein is Large ribosomal subunit protein uL16.